A 265-amino-acid chain; its full sequence is Glutamate racemase (265 aa).

Residues 9–10 (DS) and 41–42 (YG) each bind substrate. Catalysis depends on Cys-72, which acts as the Proton donor/acceptor. A substrate-binding site is contributed by 73–74 (NT). Catalysis depends on Cys-183, which acts as the Proton donor/acceptor. 184-185 (TH) serves as a coordination point for substrate.

This sequence belongs to the aspartate/glutamate racemases family.

The enzyme catalyses L-glutamate = D-glutamate. Its pathway is cell wall biogenesis; peptidoglycan biosynthesis. Provides the (R)-glutamate required for cell wall biosynthesis. The protein is Glutamate racemase of Lysinibacillus sphaericus (strain C3-41).